The primary structure comprises 151 residues: uncharacterized protein (151 aa).

A disordered region spans residues 1-48 (MRMAPTESTEGRRLWPGPREGGSGKETTSEKLSNLPRPHSYSPKRADA).

This is an uncharacterized protein from Homo sapiens (Human).